The primary structure comprises 335 residues: Transmembrane protein 120B-B (335 aa).

A coiled-coil region spans residues 1-39 (MSLQKCQEEWGELEKEFQQLQETHKVYKQKLEELSSLQN). 6 consecutive transmembrane segments (helical) span residues 100-116 (SLYL…TLLS), 130-150 (FKLY…FVLH), 157-177 (VFNF…SILI), 193-213 (VSTF…YQMF), 268-288 (FLLP…MTLF), and 300-320 (QVFV…LTTL).

Belongs to the TMEM120 family.

It localises to the nucleus inner membrane. Functionally, necessary for efficient adipogenesis. Does not show ion channel activity. The protein is Transmembrane protein 120B-B (tmem120b-b) of Xenopus laevis (African clawed frog).